The following is a 219-amino-acid chain: Clathrin light chain (219 aa).

The disordered stretch occupies residues 32 to 136 (AEITGGSASA…KKEELRQQSK (105 aa)). Residues 96–158 (PPPSREEPEK…SISKTKLASR (63 aa)) are involved in binding clathrin heavy chain. Basic and acidic residues predominate over residues 99–136 (SREEPEKIRKWREEQKQRLEEKDIEEERKKEELRQQSK).

It belongs to the clathrin light chain family. Clathrin coats are formed from molecules containing 3 heavy chains and 3 light chains.

The protein resides in the cytoplasmic vesicle membrane. The protein localises to the membrane. Its subcellular location is the coated pit. Clathrin is the major protein of the polyhedral coat of coated pits and vesicles. This Drosophila melanogaster (Fruit fly) protein is Clathrin light chain (Clc).